Consider the following 197-residue polypeptide: Phosphoheptose isomerase (197 aa).

In terms of domain architecture, SIS spans 36–197 (MVNALLNEGK…IDSQLFGSEE (162 aa)). Residue 51–53 (NGG) participates in substrate binding. 2 residues coordinate Zn(2+): His-60 and Glu-64. Substrate-binding positions include Glu-64, 93 to 94 (ND), 119 to 121 (STS), Ser-124, and Gln-174. 2 residues coordinate Zn(2+): Gln-174 and His-182.

It belongs to the SIS family. GmhA subfamily. In terms of assembly, homotetramer. The cofactor is Zn(2+).

The protein localises to the cytoplasm. It carries out the reaction 2 D-sedoheptulose 7-phosphate = D-glycero-alpha-D-manno-heptose 7-phosphate + D-glycero-beta-D-manno-heptose 7-phosphate. It functions in the pathway carbohydrate biosynthesis; D-glycero-D-manno-heptose 7-phosphate biosynthesis; D-glycero-alpha-D-manno-heptose 7-phosphate and D-glycero-beta-D-manno-heptose 7-phosphate from sedoheptulose 7-phosphate: step 1/1. In terms of biological role, catalyzes the isomerization of sedoheptulose 7-phosphate in D-glycero-D-manno-heptose 7-phosphate. This Pseudomonas fluorescens (strain SBW25) protein is Phosphoheptose isomerase.